Here is a 151-residue protein sequence, read N- to C-terminus: Putative pre-16S rRNA nuclease (151 aa).

The protein belongs to the YqgF nuclease family.

The protein resides in the cytoplasm. Could be a nuclease involved in processing of the 5'-end of pre-16S rRNA. This chain is Putative pre-16S rRNA nuclease, found in Bifidobacterium longum subsp. infantis (strain ATCC 15697 / DSM 20088 / JCM 1222 / NCTC 11817 / S12).